The chain runs to 503 residues: Excitatory amino acid transporter (503 aa).

At 1–18 (MPPDTRINKEIMVSWIRK) the chain is on the cytoplasmic side. 3 helical membrane passes run 19 to 39 (NLLL…GFLL), 59 to 79 (LMHM…ISGL), and 96 to 116 (TYYM…VLVI). At 117-198 (HPGDPTIKKE…SLDYVKASVE (82 aa)) the chain is on the extracellular side. Residues Asn-177 and Asn-187 are each glycosylated (N-linked (GlcNAc...) asparagine). 5 consecutive transmembrane segments (helical) span residues 199 to 219 (YTSG…GISL), 239 to 259 (VIMK…FCLI), 281 to 301 (VTVL…IFFV), 369 to 389 (AVAA…GQVV), and 400 to 420 (IGAA…LTAV).

It belongs to the dicarboxylate/amino acid:cation symporter (DAACS) (TC 2.A.23) family.

It is found in the membrane. Its function is as follows. Transports L-glutamate and also L- and D-aspartate. Essential for terminating the postsynaptic action of glutamate by rapidly removing released glutamate from the synaptic cleft. Acts as a symport by cotransporting sodium. The sequence is that of Excitatory amino acid transporter (glt-1) from Caenorhabditis elegans.